We begin with the raw amino-acid sequence, 1038 residues long: Isoleucine--tRNA ligase (1038 aa).

A 'HIGH' region motif is present at residues 47-57; that stretch reads PFATGLPHYGH. The 'KMSKS' region motif lies at 591 to 595; sequence KMSKR. Lys594 contributes to the ATP binding site.

Belongs to the class-I aminoacyl-tRNA synthetase family. IleS type 2 subfamily. Monomer. Zn(2+) serves as cofactor.

It is found in the cytoplasm. It catalyses the reaction tRNA(Ile) + L-isoleucine + ATP = L-isoleucyl-tRNA(Ile) + AMP + diphosphate. Its function is as follows. Catalyzes the attachment of isoleucine to tRNA(Ile). As IleRS can inadvertently accommodate and process structurally similar amino acids such as valine, to avoid such errors it has two additional distinct tRNA(Ile)-dependent editing activities. One activity is designated as 'pretransfer' editing and involves the hydrolysis of activated Val-AMP. The other activity is designated 'posttransfer' editing and involves deacylation of mischarged Val-tRNA(Ile). In Protochlamydia amoebophila (strain UWE25), this protein is Isoleucine--tRNA ligase.